We begin with the raw amino-acid sequence, 535 residues long: T-complex protein 1 subunit zeta 1 (535 aa).

The protein belongs to the TCP-1 chaperonin family. Heterooligomeric complex of about 850 to 900 kDa that forms two stacked rings, 12 to 16 nm in diameter.

It is found in the cytoplasm. Its function is as follows. Molecular chaperone; assists the folding of proteins upon ATP hydrolysis. Known to play a role, in vitro, in the folding of actin and tubulin. The sequence is that of T-complex protein 1 subunit zeta 1 from Arabidopsis thaliana (Mouse-ear cress).